Here is a 396-residue protein sequence, read N- to C-terminus: Purine ribonucleoside efflux pump NepI (396 aa).

At 1–21 the chain is on the cytoplasmic side; sequence MSEFIAENRGADAITRPNWSA. The helical transmembrane segment at 22 to 42 threads the bilayer; sequence VFSVAFCVACLIIVEFLPVSL. At 43–54 the chain is on the periplasmic side; that stretch reads LTPMAQDLGISE. Residues 55-75 form a helical membrane-spanning segment; that stretch reads GVAGQSVTVTAFVAMFASLFI. Topologically, residues 76–85 are cytoplasmic; the sequence is TQTIQATDRR. The helical transmembrane segment at 86–106 threads the bilayer; that stretch reads YVVILFAVLLTLSCLLVSFAN. Position 107 (S107) is a topological domain, periplasmic. Residues 108-128 traverse the membrane as a helical segment; sequence FSLLLIGRACLGLALGGFWAI. At 129-147 the chain is on the cytoplasmic side; that stretch reads SASLTMRLVPPRTVPKALS. The chain crosses the membrane as a helical span at residues 148 to 168; that stretch reads VIFGAVSIALVIAAPLGGFLG. Topologically, residues 169–175 are periplasmic; it reads ELIGWRN. A helical transmembrane segment spans residues 176 to 196; that stretch reads VFNAAAAMGVLCIFWIIKSLP. The Cytoplasmic segment spans residues 197 to 215; it reads SLPGEPSHQKQNTFRLLQR. A helical membrane pass occupies residues 216 to 236; that stretch reads PGVMAGMIAIFMSFAGQFAFF. The Periplasmic segment spans residues 237–255; the sequence is TYIRPVYMNLAGFGVDGLT. Residues 256–276 form a helical membrane-spanning segment; that stretch reads LVLLSFGIASFVGTSLSSFIL. Residues 277–281 are Cytoplasmic-facing; sequence KRSVK. The chain crosses the membrane as a helical span at residues 282-302; the sequence is LALAGAPFVLALSALVLTLWG. Over 303–305 the chain is Periplasmic; the sequence is SDK. Residues 306–326 traverse the membrane as a helical segment; sequence IVATGVAIIWGLTFALIPVGW. Over 327 to 343 the chain is Cytoplasmic; sequence STWITRSLADQAEKAGS. Residues 344-364 traverse the membrane as a helical segment; the sequence is IQVAVIQLANTCGAAIGGYAL. Over 365-366 the chain is Periplasmic; sequence DN. A helical transmembrane segment spans residues 367–387; it reads IGLTSPLMLSGTLMLLTALLV. Topologically, residues 388–396 are cytoplasmic; it reads TAKVKMKKS.

The protein belongs to the major facilitator superfamily. DHA1 family. NepI (TC 2.A.1.2.26) subfamily.

The protein localises to the cell inner membrane. The catalysed reaction is inosine(in) + H(+)(out) = inosine(out) + H(+)(in). It catalyses the reaction guanosine(in) + H(+)(out) = guanosine(out) + H(+)(in). Functionally, involved in the efflux of purine ribonucleosides, such as inosine and guanosine. This Escherichia coli O127:H6 (strain E2348/69 / EPEC) protein is Purine ribonucleoside efflux pump NepI.